The primary structure comprises 116 residues: NADH-ubiquinone oxidoreductase chain 3 (116 aa).

Helical transmembrane passes span 8–28 (VAAT…LPSL), 56–76 (FFLV…LLPL), and 87–107 (ISLL…IYEW).

The protein belongs to the complex I subunit 3 family.

It is found in the mitochondrion membrane. The catalysed reaction is a ubiquinone + NADH + 5 H(+)(in) = a ubiquinol + NAD(+) + 4 H(+)(out). In terms of biological role, core subunit of the mitochondrial membrane respiratory chain NADH dehydrogenase (Complex I) that is believed to belong to the minimal assembly required for catalysis. Complex I functions in the transfer of electrons from NADH to the respiratory chain. The immediate electron acceptor for the enzyme is believed to be ubiquinone. The chain is NADH-ubiquinone oxidoreductase chain 3 (MT-ND3) from Squalus acanthias (Spiny dogfish).